The following is a 110-amino-acid chain: MMEVKAIHRGARISAQKTRLVADQIRGLPVDKALNVLTFSPKKAAGIVKKVVLSAIANAEHNEGADIDELKITSIYIDKAASLKRFTARAKGRGNRIEKQSCHITVTVGN.

It belongs to the universal ribosomal protein uL22 family. In terms of assembly, part of the 50S ribosomal subunit.

This protein binds specifically to 23S rRNA; its binding is stimulated by other ribosomal proteins, e.g. L4, L17, and L20. It is important during the early stages of 50S assembly. It makes multiple contacts with different domains of the 23S rRNA in the assembled 50S subunit and ribosome. In terms of biological role, the globular domain of the protein is located near the polypeptide exit tunnel on the outside of the subunit, while an extended beta-hairpin is found that lines the wall of the exit tunnel in the center of the 70S ribosome. The protein is Large ribosomal subunit protein uL22 of Paraburkholderia phytofirmans (strain DSM 17436 / LMG 22146 / PsJN) (Burkholderia phytofirmans).